Consider the following 2137-residue polypeptide: Pecanex-like protein 2 (2137 aa).

The next 2 helical transmembrane spans lie at 34-54 and 57-77; these read CHLY…LAFP and AIIV…IKLV. Disordered stretches follow at residues 92–163, 225–251, 402–530, and 545–572; these read QQKP…LELS, NGKG…VDKG, EKTS…HARV, and SAEI…QMPN. Residues 96-114 are compositionally biased toward basic and acidic residues; it reads SRKEEKPNKDKEAKGEHIT. Residues 116-125 show a composition bias toward polar residues; that stretch reads HRNPSNNRQI. N-linked (GlcNAc...) asparagine glycosylation occurs at N136. Polar residues predominate over residues 146–156; the sequence is SRGQSITSHHS. The N-linked (GlcNAc...) asparagine glycan is linked to N449. Positions 479-490 are enriched in basic and acidic residues; sequence IKDHSSSSREPW. Positions 510–520 are enriched in polar residues; that stretch reads GQTNLDPSSCK. Residues N550, N572, N587, N598, and N613 are each glycosylated (N-linked (GlcNAc...) asparagine). The span at 593–602 shows a compositional bias: polar residues; the sequence is ASSQLNGSAE. Residues 593–612 form a disordered region; sequence ASSQLNGSAEQNEESGLLRD. Disordered stretches follow at residues 621–655 and 740–763; these read EILE…CTQP and AREM…SGDP. Residues 630–655 are compositionally biased toward polar residues; the sequence is GHSSKQGKPDLQSQDHTSTGPACTQP. Over residues 746 to 760 the composition is skewed to low complexity; sequence SSSSTTTSESQDPSS. The next 13 helical transmembrane spans lie at 844-864, 868-888, 901-921, 952-972, 983-1003, 1029-1049, 1099-1119, 1124-1144, 1193-1213, 1237-1257, 1265-1285, 1302-1322, and 1324-1344; these read LAIL…SQGF, MWVL…LKSV, QIIT…ILLL, YLIV…FPQI, IDML…VYSV, HIPA…YHLS, LIVC…TVFL, FLSI…HYVL, YILY…LISN, SFCN…FFHF, SFLL…DLLH, GSSF…MLFF, and TIAT…VIFI. N1412, N1553, and N1818 each carry an N-linked (GlcNAc...) asparagine glycan. Residues 1876-1958 are disordered; that stretch reads RQHSGGNIED…RPPMLSSSGP (83 aa). Composition is skewed to polar residues over residues 1901–1910, 1920–1929, and 1937–1958; these read SGGSQESSAE, GVSSCEGTQR, and SQSV…SSGP. An N-linked (GlcNAc...) asparagine glycan is attached at N2054.

Belongs to the pecanex family.

It is found in the membrane. Functionally, may play a role in tumorigenesis of colorectal carcinomas with high microsatellite instability (MSI-H). The polypeptide is Pecanex-like protein 2 (Homo sapiens (Human)).